A 557-amino-acid chain; its full sequence is Glucose-6-phosphate isomerase (557 aa).

Glu361 functions as the Proton donor in the catalytic mechanism. Catalysis depends on residues His392 and Lys520.

It belongs to the GPI family.

The protein localises to the cytoplasm. The enzyme catalyses alpha-D-glucose 6-phosphate = beta-D-fructose 6-phosphate. The protein operates within carbohydrate biosynthesis; gluconeogenesis. It participates in carbohydrate degradation; glycolysis; D-glyceraldehyde 3-phosphate and glycerone phosphate from D-glucose: step 2/4. Functionally, catalyzes the reversible isomerization of glucose-6-phosphate to fructose-6-phosphate. This chain is Glucose-6-phosphate isomerase, found in Acinetobacter venetianus (strain ATCC 31012 / DSM 23050 / BCRC 14357 / CCUG 45561 / CIP 110063 / KCTC 2702 / LMG 19082 / RAG-1).